The following is a 61-amino-acid chain: Potassium channel toxin alpha-KTx 6.6 (61 aa).

A signal peptide spans 1–23 (MNAKFILLLLVVATTMLLPDTQG). Disulfide bonds link cysteine 29/cysteine 50, cysteine 35/cysteine 55, cysteine 39/cysteine 57, and cysteine 45/cysteine 60. Residue cysteine 60 is modified to Cysteine amide.

Belongs to the short scorpion toxin superfamily. Potassium channel inhibitor family. Alpha-KTx 06 subfamily. Expressed by the venom gland.

Its subcellular location is the secreted. Its function is as follows. Blocker of voltage-gated potassium channels. The sequence is that of Potassium channel toxin alpha-KTx 6.6 from Opistophthalmus carinatus (African yellow leg scorpion).